The following is a 118-amino-acid chain: D-dopachrome decarboxylase (118 aa).

Residue Pro-2 is modified to N-acetylproline.

Belongs to the MIF family. In terms of assembly, homotrimer.

The protein resides in the cytoplasm. The catalysed reaction is D-dopachrome + H(+) = 5,6-dihydroxyindole + CO2. In terms of biological role, tautomerization of D-dopachrome with decarboxylation to give 5,6-dihydroxyindole (DHI). This chain is D-dopachrome decarboxylase (ddt), found in Xenopus tropicalis (Western clawed frog).